We begin with the raw amino-acid sequence, 116 residues long: Non-specific lipid-transfer protein (116 aa).

The N-terminal stretch at 1-23 (MASMKVVCVALIMCIVIAPMAES) is a signal peptide. 4 disulfide bridges follow: Cys-27–Cys-74, Cys-37–Cys-51, Cys-52–Cys-97, and Cys-72–Cys-111.

This sequence belongs to the plant LTP family.

Functionally, plant non-specific lipid-transfer proteins transfer phospholipids as well as galactolipids across membranes. May play a role in wax or cutin deposition in the cell walls of expanding epidermal cells and certain secretory tissues. The sequence is that of Non-specific lipid-transfer protein from Cicer arietinum (Chickpea).